Consider the following 246-residue polypeptide: tRNA (guanine-N(7)-)-methyltransferase (246 aa).

S-adenosyl-L-methionine is bound by residues Glu77, Glu102, Asp129, and Asp152. Residue Asp152 is part of the active site. Substrate contacts are provided by residues Lys156, Asp188, and 225-228 (TKFE).

Belongs to the class I-like SAM-binding methyltransferase superfamily. TrmB family.

It catalyses the reaction guanosine(46) in tRNA + S-adenosyl-L-methionine = N(7)-methylguanosine(46) in tRNA + S-adenosyl-L-homocysteine. It functions in the pathway tRNA modification; N(7)-methylguanine-tRNA biosynthesis. In terms of biological role, catalyzes the formation of N(7)-methylguanine at position 46 (m7G46) in tRNA. This is tRNA (guanine-N(7)-)-methyltransferase from Haemophilus influenzae (strain PittGG).